We begin with the raw amino-acid sequence, 310 residues long: 4-diphosphocytidyl-2-C-methyl-D-erythritol kinase (310 aa).

K10 is a catalytic residue. Position 102–112 (102–112 (PVAGGMAGGSA)) interacts with ATP. The active site involves D144. The tract at residues 289–310 (TRTARGPAAGAQLLPGPVGSFA) is disordered.

Belongs to the GHMP kinase family. IspE subfamily.

The catalysed reaction is 4-CDP-2-C-methyl-D-erythritol + ATP = 4-CDP-2-C-methyl-D-erythritol 2-phosphate + ADP + H(+). The protein operates within isoprenoid biosynthesis; isopentenyl diphosphate biosynthesis via DXP pathway; isopentenyl diphosphate from 1-deoxy-D-xylulose 5-phosphate: step 3/6. Functionally, catalyzes the phosphorylation of the position 2 hydroxy group of 4-diphosphocytidyl-2C-methyl-D-erythritol. This chain is 4-diphosphocytidyl-2-C-methyl-D-erythritol kinase, found in Cutibacterium acnes (strain DSM 16379 / KPA171202) (Propionibacterium acnes).